A 338-amino-acid polypeptide reads, in one-letter code: Glyceraldehyde-3-phosphate dehydrogenase, cytosolic (338 aa).

Residues 13-14, D35, and R82 contribute to the NAD(+) site; that span reads RI. D-glyceraldehyde 3-phosphate-binding positions include 153-155, T184, 213-214, and R236; these read SCT and TG. Residue C154 is the Nucleophile of the active site. N318 lines the NAD(+) pocket.

Belongs to the glyceraldehyde-3-phosphate dehydrogenase family. Homotetramer.

Its subcellular location is the cytoplasm. It carries out the reaction D-glyceraldehyde 3-phosphate + phosphate + NAD(+) = (2R)-3-phospho-glyceroyl phosphate + NADH + H(+). It functions in the pathway carbohydrate degradation; glycolysis; pyruvate from D-glyceraldehyde 3-phosphate: step 1/5. Its function is as follows. Key enzyme in glycolysis that catalyzes the first step of the pathway by converting D-glyceraldehyde 3-phosphate (G3P) into 3-phospho-D-glyceroyl phosphate. Essential for the maintenance of cellular ATP levels and carbohydrate metabolism. This Dianthus caryophyllus (Carnation) protein is Glyceraldehyde-3-phosphate dehydrogenase, cytosolic (GAPC).